Reading from the N-terminus, the 282-residue chain is Acetyl-coenzyme A carboxylase carboxyl transferase subunit beta (282 aa).

Positions 29–282 constitute a CoA carboxyltransferase N-terminal domain; the sequence is LMQRCPNCGL…LLKYGGMQDD (254 aa). 4 residues coordinate Zn(2+): C33, C36, C51, and C54. The C4-type zinc-finger motif lies at 33–54; that stretch reads CPNCGLEFFARRLDKYKTCPDC.

It belongs to the AccD/PCCB family. In terms of assembly, acetyl-CoA carboxylase is a heterohexamer composed of biotin carboxyl carrier protein (AccB), biotin carboxylase (AccC) and two subunits each of ACCase subunit alpha (AccA) and ACCase subunit beta (AccD). Zn(2+) is required as a cofactor.

Its subcellular location is the cytoplasm. The enzyme catalyses N(6)-carboxybiotinyl-L-lysyl-[protein] + acetyl-CoA = N(6)-biotinyl-L-lysyl-[protein] + malonyl-CoA. Its pathway is lipid metabolism; malonyl-CoA biosynthesis; malonyl-CoA from acetyl-CoA: step 1/1. Functionally, component of the acetyl coenzyme A carboxylase (ACC) complex. Biotin carboxylase (BC) catalyzes the carboxylation of biotin on its carrier protein (BCCP) and then the CO(2) group is transferred by the transcarboxylase to acetyl-CoA to form malonyl-CoA. This chain is Acetyl-coenzyme A carboxylase carboxyl transferase subunit beta, found in Lactobacillus delbrueckii subsp. bulgaricus (strain ATCC BAA-365 / Lb-18).